The chain runs to 323 residues: tRNA-modifying protein YgfZ (323 aa).

Residues W29 and W182 each contribute to the folate site.

Belongs to the tRNA-modifying YgfZ family.

It is found in the cytoplasm. Folate-binding protein involved in regulating the level of ATP-DnaA and in the modification of some tRNAs. It is probably a key factor in regulatory networks that act via tRNA modification, such as initiation of chromosomal replication. The chain is tRNA-modifying protein YgfZ from Vibrio cholerae serotype O1 (strain M66-2).